Reading from the N-terminus, the 339-residue chain is Phenylalanine--tRNA ligase alpha subunit (339 aa).

Glutamate 254 serves as a coordination point for Mg(2+).

This sequence belongs to the class-II aminoacyl-tRNA synthetase family. Phe-tRNA synthetase alpha subunit type 1 subfamily. Tetramer of two alpha and two beta subunits. It depends on Mg(2+) as a cofactor.

It localises to the cytoplasm. It catalyses the reaction tRNA(Phe) + L-phenylalanine + ATP = L-phenylalanyl-tRNA(Phe) + AMP + diphosphate + H(+). The chain is Phenylalanine--tRNA ligase alpha subunit from Clostridium perfringens (strain ATCC 13124 / DSM 756 / JCM 1290 / NCIMB 6125 / NCTC 8237 / Type A).